Consider the following 942-residue polypeptide: Apolipoprotein B receptor (942 aa).

5 disordered regions span residues 66–212 (GLRS…VTED), 240–269 (ERMV…QAML), 283–487 (DSLG…SPER), 501–607 (AGPE…VPWE), and 671–942 (EGRG…PKPQ). Basic and acidic residues-rich tracts occupy residues 106 to 123 (QAER…DARG), 132 to 143 (PEAEPGTHRDRS), 240 to 252 (ERMV…ERAR), 312 to 330 (EADK…EAEV), and 338 to 352 (EAER…HIAE). Residues 353–370 (EEAMGEQETEGSFEDEER) show a composition bias toward acidic residues. Ser-364 carries the phosphoserine modification. Basic and acidic residues predominate over residues 384–397 (EEVRAEESSREKRN). Residues 415–425 (PDWEDSPEVST) show a composition bias toward acidic residues. 2 stretches are compositionally biased toward basic and acidic residues: residues 444-458 (LRVK…ELVR) and 466-475 (QLEEGQKGQE). Phosphoserine occurs at positions 484 and 520. Composition is skewed to basic and acidic residues over residues 514–531 (GVDR…EAGK) and 672–687 (GRGE…ETTE). Residues 709 to 721 (QEIDGTEEGEQAE) are compositionally biased toward acidic residues. Positions 837–853 (SRLDVSVPRSRVLLSRS) are enriched in low complexity. A compositionally biased stretch (basic residues) spans 854-863 (SSRRRSRPSF).

As to quaternary structure, homodimer. There are 2 forms in macrophages, the membrane-binding proteins 200 kDa (MBP 200) and 235 kDa (MBP 235), that can be reduced into a single active ligand-binding species with intermediate mobility (MBP 200R). As to expression, highly expressed in spleen, lung and skeletal muscle, and weakly in brain, heart, kidney, and testis.

It is found in the cell membrane. Functionally, macrophage receptor that binds to the apolipoprotein B48 (APOB) of dietary triglyceride (TG)-rich lipoproteins (TRL) or to a like domain of APOB in hypertriglyceridemic very low density lipoprotein (HTG-VLDL). Binds and internalizes TRL when out of the context of the macrophage. May provide essential lipids to reticuloendothelial cells. Could also be involved in foam cell formation with elevated TRL and remnant lipoprotein (RLP). Mediates the rapid high-affinity uptake of chylomicrons (CM), HTG-VLDL, and trypsinized (tryp) VLDL devoid of APOE in vitro in macrophages. This Mus musculus (Mouse) protein is Apolipoprotein B receptor.